The primary structure comprises 125 residues: Napin-3 (125 aa).

4 disulfide bridges follow: C10/C62, C23/C51, C52/C107, and C64/C115.

The protein belongs to the 2S seed storage albumins family. As to quaternary structure, the mature protein consists of a small and a large chain linked by disulfide bonds.

In terms of biological role, the small, basic, water-soluble napins are one of the two major kinds of storage proteins synthesized in the seed during its maturation. This Brassica napus (Rape) protein is Napin-3.